Consider the following 251-residue polypeptide: Imidazole glycerol phosphate synthase subunit HisF (251 aa).

Catalysis depends on residues D12 and D131.

It belongs to the HisA/HisF family. As to quaternary structure, heterodimer of HisH and HisF.

It localises to the cytoplasm. The enzyme catalyses 5-[(5-phospho-1-deoxy-D-ribulos-1-ylimino)methylamino]-1-(5-phospho-beta-D-ribosyl)imidazole-4-carboxamide + L-glutamine = D-erythro-1-(imidazol-4-yl)glycerol 3-phosphate + 5-amino-1-(5-phospho-beta-D-ribosyl)imidazole-4-carboxamide + L-glutamate + H(+). The protein operates within amino-acid biosynthesis; L-histidine biosynthesis; L-histidine from 5-phospho-alpha-D-ribose 1-diphosphate: step 5/9. In terms of biological role, IGPS catalyzes the conversion of PRFAR and glutamine to IGP, AICAR and glutamate. The HisF subunit catalyzes the cyclization activity that produces IGP and AICAR from PRFAR using the ammonia provided by the HisH subunit. This chain is Imidazole glycerol phosphate synthase subunit HisF, found in Streptomyces griseus subsp. griseus (strain JCM 4626 / CBS 651.72 / NBRC 13350 / KCC S-0626 / ISP 5235).